Consider the following 94-residue polypeptide: Small ribosomal subunit protein uS19c (94 aa).

This sequence belongs to the universal ribosomal protein uS19 family.

The protein localises to the plastid. In terms of biological role, protein S19 forms a complex with S13 that binds strongly to the 16S ribosomal RNA. This is Small ribosomal subunit protein uS19c (rps19) from Epifagus virginiana (Beechdrops).